A 323-amino-acid chain; its full sequence is Forkhead transcription factor fkh-6 (323 aa).

Positions 21–122 (KPPYSYVALI…DNGNFKRRRV (102 aa)) form a DNA-binding region, fork-head.

Its subcellular location is the nucleus. Functionally, probable transcription factor. Binds to the DNA sequence motif 5'-[TA]TGTT[TG]T[TG][ATG]TT-3'. Regulates sexual dimorphism in the gonad, promoting male gonadal cell fates in chromosomally (XO) male animals, yet plays a role in gonadogenesis in both sexes; probably acts downstream of terminal regulator of sex determination tra-1, to control early gonadogenesis. Positively modulates expression of homeobox protein egl-5, probably acting indirectly, during early gonadal development. This chain is Forkhead transcription factor fkh-6, found in Caenorhabditis elegans.